The following is an 88-amino-acid chain: MLTNTDRQQVIAQYQRAPGDTGSPEVQIALLSARINDLQAHFKEHKGDHHSRRGLIRMVNQRRKLLDYLKRKDLTRYASLISELGLRR.

The segment covering 1 to 12 (MLTNTDRQQVIA) has biased composition (polar residues). Positions 1–23 (MLTNTDRQQVIAQYQRAPGDTGS) are disordered.

It belongs to the universal ribosomal protein uS15 family. Part of the 30S ribosomal subunit. Forms a bridge to the 50S subunit in the 70S ribosome, contacting the 23S rRNA.

In terms of biological role, one of the primary rRNA binding proteins, it binds directly to 16S rRNA where it helps nucleate assembly of the platform of the 30S subunit by binding and bridging several RNA helices of the 16S rRNA. Functionally, forms an intersubunit bridge (bridge B4) with the 23S rRNA of the 50S subunit in the ribosome. This chain is Small ribosomal subunit protein uS15, found in Psychrobacter sp. (strain PRwf-1).